The following is a 381-amino-acid chain: Creatine kinase B-type (381 aa).

Residue Ser4 is modified to Phosphoserine. The region spanning 11 to 98 is the Phosphagen kinase N-terminal domain; the sequence is KLRFPAEDEF…FDPIIEDRHG (88 aa). Residue Thr35 is modified to Phosphothreonine. Lys45 is covalently cross-linked (Glycyl lysine isopeptide (Lys-Gly) (interchain with G-Cter in ubiquitin)). Val72 is a binding site for creatine. Basic and acidic residues predominate over residues 96–110; that stretch reads RHGGYKPSDEHKTDL. Residues 96–123 form a disordered region; the sequence is RHGGYKPSDEHKTDLNPDNLQGGDDLDP. Glycyl lysine isopeptide (Lys-Gly) (interchain with G-Cter in ubiquitin) cross-links involve residues Lys101 and Lys107. Residue Tyr125 is modified to Phosphotyrosine. The region spanning 125 to 367 is the Phosphagen kinase C-terminal domain; sequence YVLSSRVRTG…KLLIEMEQRL (243 aa). ATP-binding positions include 128–132, Arg130, Arg132, and His191; that span reads SSRVR. The interval 130–138 is internal MTS-like signal; the sequence is RVRTGRSIR. A Phosphoserine modification is found at Ser199. Glu232 is a creatine binding site. Arg236 is a binding site for ATP. Tyr269 bears the 3'-nitrotyrosine mark. Ser285 serves as a coordination point for creatine. ATP-binding positions include Arg292, Arg320, 320-325, and Asp335; that span reads RGTGGV. Thr322 carries the post-translational modification Phosphothreonine. Residue Lys381 forms a Glycyl lysine isopeptide (Lys-Gly) (interchain with G-Cter in ubiquitin) linkage.

The protein belongs to the ATP:guanido phosphotransferase family. Dimer of identical or non-identical chains, which can be either B (brain type) or M (muscle type). With MM being the major form in skeletal muscle and myocardium, MB existing in myocardium, and BB existing in many tissues, especially brain. Interacts with SLC12A6 (via C-terminus); the interaction may be required for SLC12A6 potassium-chloride cotransport activity. Ubiquitinated by the ECS(ASB9) complex, leading to its degradation by the proteasome.

The protein resides in the cytoplasm. The protein localises to the cytosol. Its subcellular location is the mitochondrion. It is found in the cell membrane. It catalyses the reaction creatine + ATP = N-phosphocreatine + ADP + H(+). Its function is as follows. Reversibly catalyzes the transfer of phosphate between ATP and various phosphogens (e.g. creatine phosphate). Creatine kinase isoenzymes play a central role in energy transduction in tissues with large, fluctuating energy demands, such as skeletal muscle, heart, brain and spermatozoa. Acts as a key regulator of adaptive thermogenesis as part of the futile creatine cycle: localizes to the mitochondria of thermogenic fat cells and acts by mediating phosphorylation of creatine to initiate a futile cycle of creatine phosphorylation and dephosphorylation. During the futile creatine cycle, creatine and N-phosphocreatine are in a futile cycle, which dissipates the high energy charge of N-phosphocreatine as heat without performing any mechanical or chemical work. The chain is Creatine kinase B-type (CKB) from Canis lupus familiaris (Dog).